The chain runs to 441 residues: Ribulose bisphosphate carboxylase large chain (441 aa).

Lys-5 carries the N6,N6,N6-trimethyllysine modification. Thr-164 serves as a coordination point for substrate. Catalysis depends on Lys-166, which acts as the Proton acceptor. Substrate is bound at residue Lys-168. Residues Lys-192, Asp-194, and Glu-195 each contribute to the Mg(2+) site. Lys-192 bears the N6-carboxylysine mark. His-285 (proton acceptor) is an active-site residue. 3 residues coordinate substrate: Arg-286, His-318, and Ser-370.

Belongs to the RuBisCO large chain family. Type I subfamily. Heterohexadecamer of 8 large chains and 8 small chains; disulfide-linked. The disulfide link is formed within the large subunit homodimers. Requires Mg(2+) as cofactor. The disulfide bond which can form in the large chain dimeric partners within the hexadecamer appears to be associated with oxidative stress and protein turnover.

It is found in the plastid. Its subcellular location is the chloroplast. The catalysed reaction is 2 (2R)-3-phosphoglycerate + 2 H(+) = D-ribulose 1,5-bisphosphate + CO2 + H2O. It carries out the reaction D-ribulose 1,5-bisphosphate + O2 = 2-phosphoglycolate + (2R)-3-phosphoglycerate + 2 H(+). RuBisCO catalyzes two reactions: the carboxylation of D-ribulose 1,5-bisphosphate, the primary event in carbon dioxide fixation, as well as the oxidative fragmentation of the pentose substrate in the photorespiration process. Both reactions occur simultaneously and in competition at the same active site. This chain is Ribulose bisphosphate carboxylase large chain, found in Hemionitis engywookii (Fendler's false cloak fern).